Reading from the N-terminus, the 619-residue chain is E3 ubiquitin-protein ligase DTX4 (619 aa).

2 WWE domains span residues 1–78 and 79–155; these read MLLA…PVRR and NYYD…RVRR. 2 disordered regions span residues 238-281 and 358-389; these read KPLD…PGPN and PPPV…KGKT. Over residues 261 to 273 the composition is skewed to polar residues; sequence QASSMPTGTTMGS. Residues 378 to 387 show a composition bias toward basic residues; it reads KTTKKQAKKG. The RING-type; atypical zinc-finger motif lies at 409–468; sequence CTICMERLTAPSGYKGPQPTVKPDLVGKLSRCGHVYHIYCLVAMYNNGNKDGSLQCPTCK.

The protein belongs to the Deltex family. Interacts with NLRP4.

It localises to the cytoplasm. It carries out the reaction S-ubiquitinyl-[E2 ubiquitin-conjugating enzyme]-L-cysteine + [acceptor protein]-L-lysine = [E2 ubiquitin-conjugating enzyme]-L-cysteine + N(6)-ubiquitinyl-[acceptor protein]-L-lysine.. It participates in protein modification; protein ubiquitination. Regulator of Notch signaling, a signaling pathway involved in cell-cell communications that regulates a broad spectrum of cell-fate determinations. Functions as a ubiquitin ligase protein in vivo, mediating 'Lys48'-linked polyubiquitination and promoting degradation of TBK1, targeting to TBK1 requires interaction with NLRP4. The chain is E3 ubiquitin-protein ligase DTX4 (DTX4) from Homo sapiens (Human).